A 280-amino-acid polypeptide reads, in one-letter code: Inner kinetochore subunit fta1 (280 aa).

This sequence belongs to the CENP-L/IML3 family. As to quaternary structure, component of the inner kinetochore constitutive centromere-associated network (CCAN) (also known as central kinetochore Sim4 complex in fission yeast), which is composed of at least cnl2, cnp3, cnp20, fta1, fta2, fta3, fta4, fta6, fta7, mal2, mhf1, mhf2, mis6, mis15, mis17, sim4 and wip1.

It localises to the nucleus. It is found in the chromosome. Its subcellular location is the centromere. The protein resides in the kinetochore. In terms of biological role, component of the kinetochore, a multiprotein complex that assembles on centromeric DNA and attaches chromosomes to spindle microtubules, mediating chromosome segregation and sister chromatid segregation during meiosis and mitosis. Component of the inner kinetochore constitutive centromere-associated network (CCAN), which serves as a structural platform for outer kinetochore assembly. This chain is Inner kinetochore subunit fta1 (fta1), found in Schizosaccharomyces pombe (strain 972 / ATCC 24843) (Fission yeast).